We begin with the raw amino-acid sequence, 174 residues long: NADH-quinone oxidoreductase subunit B (174 aa).

Residues Cys-53, Cys-54, Cys-118, and Cys-148 each coordinate [4Fe-4S] cluster.

It belongs to the complex I 20 kDa subunit family. NDH-1 is composed of 14 different subunits. Subunits NuoB, C, D, E, F, and G constitute the peripheral sector of the complex. The cofactor is [4Fe-4S] cluster.

It localises to the cell inner membrane. It carries out the reaction a quinone + NADH + 5 H(+)(in) = a quinol + NAD(+) + 4 H(+)(out). In terms of biological role, NDH-1 shuttles electrons from NADH, via FMN and iron-sulfur (Fe-S) centers, to quinones in the respiratory chain. Couples the redox reaction to proton translocation (for every two electrons transferred, four hydrogen ions are translocated across the cytoplasmic membrane), and thus conserves the redox energy in a proton gradient. The sequence is that of NADH-quinone oxidoreductase subunit B from Ruegeria sp. (strain TM1040) (Silicibacter sp.).